Here is a 223-residue protein sequence, read N- to C-terminus: Phosphoribosylformylglycinamidine synthase subunit PurQ (223 aa).

One can recognise a Glutamine amidotransferase type-1 domain in the interval 3 to 223 (FAVLVFPGSN…MVKSWREQHV (221 aa)). Residue Cys-85 is the Nucleophile of the active site. Active-site residues include His-193 and Glu-195.

As to quaternary structure, part of the FGAM synthase complex composed of 1 PurL, 1 PurQ and 2 PurS subunits.

It is found in the cytoplasm. It carries out the reaction N(2)-formyl-N(1)-(5-phospho-beta-D-ribosyl)glycinamide + L-glutamine + ATP + H2O = 2-formamido-N(1)-(5-O-phospho-beta-D-ribosyl)acetamidine + L-glutamate + ADP + phosphate + H(+). The enzyme catalyses L-glutamine + H2O = L-glutamate + NH4(+). It functions in the pathway purine metabolism; IMP biosynthesis via de novo pathway; 5-amino-1-(5-phospho-D-ribosyl)imidazole from N(2)-formyl-N(1)-(5-phospho-D-ribosyl)glycinamide: step 1/2. In terms of biological role, part of the phosphoribosylformylglycinamidine synthase complex involved in the purines biosynthetic pathway. Catalyzes the ATP-dependent conversion of formylglycinamide ribonucleotide (FGAR) and glutamine to yield formylglycinamidine ribonucleotide (FGAM) and glutamate. The FGAM synthase complex is composed of three subunits. PurQ produces an ammonia molecule by converting glutamine to glutamate. PurL transfers the ammonia molecule to FGAR to form FGAM in an ATP-dependent manner. PurS interacts with PurQ and PurL and is thought to assist in the transfer of the ammonia molecule from PurQ to PurL. The protein is Phosphoribosylformylglycinamidine synthase subunit PurQ of Staphylococcus aureus (strain MRSA252).